The chain runs to 599 residues: Elongation factor 4 (599 aa).

In terms of domain architecture, tr-type G spans 2–184; it reads KNIRNFSIIA…RLVRDIPPPE (183 aa). Residues 14 to 19 and 131 to 134 contribute to the GTP site; these read DHGKST and NKID.

Belongs to the TRAFAC class translation factor GTPase superfamily. Classic translation factor GTPase family. LepA subfamily.

The protein resides in the cell inner membrane. The catalysed reaction is GTP + H2O = GDP + phosphate + H(+). Functionally, required for accurate and efficient protein synthesis under certain stress conditions. May act as a fidelity factor of the translation reaction, by catalyzing a one-codon backward translocation of tRNAs on improperly translocated ribosomes. Back-translocation proceeds from a post-translocation (POST) complex to a pre-translocation (PRE) complex, thus giving elongation factor G a second chance to translocate the tRNAs correctly. Binds to ribosomes in a GTP-dependent manner. In Escherichia coli O8 (strain IAI1), this protein is Elongation factor 4.